Here is a 689-residue protein sequence, read N- to C-terminus: ATP-dependent zinc metalloprotease FtsH 2 (689 aa).

Residues 1–3 (MRK) lie on the Cytoplasmic side of the membrane. A helical transmembrane segment spans residues 4 to 24 (FFRGASFYILAFIIILFIVQN). Topologically, residues 25–111 (FGRPTQEIDE…SAAPPPTTPW (87 aa)) are extracellular. Residues 112–132 (FIELLPSIFMVLIFIVFWFVF) form a helical membrane-spanning segment. The Cytoplasmic portion of the chain corresponds to 133–689 (MQQSQGGGNR…QDNEENRKEE (557 aa)). 205 to 212 (GPPGTGKT) contributes to the ATP binding site. H427 serves as a coordination point for Zn(2+). E428 is an active-site residue. Zn(2+) is bound by residues H431 and D503. Positions 661–673 (EELIEVSSDKEEE) are enriched in basic and acidic residues. The tract at residues 661–689 (EELIEVSSDKEEEKDNQDDQDNEENRKEE) is disordered.

It in the central section; belongs to the AAA ATPase family. This sequence in the C-terminal section; belongs to the peptidase M41 family. Homohexamer. It depends on Zn(2+) as a cofactor.

It localises to the cell membrane. Acts as a processive, ATP-dependent zinc metallopeptidase for both cytoplasmic and membrane proteins. Plays a role in the quality control of integral membrane proteins. In Alkaliphilus metalliredigens (strain QYMF), this protein is ATP-dependent zinc metalloprotease FtsH 2.